Consider the following 289-residue polypeptide: Shikimate dehydrogenase (NADP(+)) (289 aa).

Shikimate-binding positions include 20–22 and Ser-67; that span reads SIS. Lys-71 acts as the Proton acceptor in catalysis. An NADP(+)-binding site is contributed by Asp-83. Positions 92 and 107 each coordinate shikimate. Residues 132-136 and Val-230 each bind NADP(+); that span reads GGGGA. Tyr-232 lines the shikimate pocket. Gly-253 is an NADP(+) binding site.

This sequence belongs to the shikimate dehydrogenase family. In terms of assembly, homodimer.

It catalyses the reaction shikimate + NADP(+) = 3-dehydroshikimate + NADPH + H(+). Its pathway is metabolic intermediate biosynthesis; chorismate biosynthesis; chorismate from D-erythrose 4-phosphate and phosphoenolpyruvate: step 4/7. Functionally, involved in the biosynthesis of the chorismate, which leads to the biosynthesis of aromatic amino acids. Catalyzes the reversible NADPH linked reduction of 3-dehydroshikimate (DHSA) to yield shikimate (SA). In Streptococcus suis (strain 98HAH33), this protein is Shikimate dehydrogenase (NADP(+)).